Here is a 333-residue protein sequence, read N- to C-terminus: Tryptophan--tRNA ligase (333 aa).

ATP contacts are provided by residues 9–11 (QPT) and 17–18 (GN). A 'HIGH' region motif is present at residues 10–18 (PTNNLTLGN). L-tryptophan is bound at residue D140. ATP is bound by residues 152 to 154 (GQD), I191, and 200 to 204 (KMSKS). Residues 200–204 (KMSKS) carry the 'KMSKS' region motif.

Belongs to the class-I aminoacyl-tRNA synthetase family. In terms of assembly, homodimer.

It localises to the cytoplasm. It carries out the reaction tRNA(Trp) + L-tryptophan + ATP = L-tryptophyl-tRNA(Trp) + AMP + diphosphate + H(+). Catalyzes the attachment of tryptophan to tRNA(Trp). In Ureaplasma parvum serovar 3 (strain ATCC 700970), this protein is Tryptophan--tRNA ligase.